A 202-amino-acid polypeptide reads, in one-letter code: MATEAPPPVDTTEVPPFTAAETAVKQPHKLERKWTFWFDNQSKPKQGAAWGSSLKKAYTFDTVEEFWSLYDQIFKPSKLTVNADFHLFKAGIEPKWEDPECANGGKWTVTSSRKANLETMWLETLMALVGEQFDDSEDICGVVASVRRSQDKLSLWTKTATNEAAQMGIGRKWKEIIDTEKISYSFHDDSKRERSAKSRYTV.

The interval 1–24 (MATEAPPPVDTTEVPPFTAAETAV) is disordered. MRNA contacts are provided by residues 46–51 (QGAAWG), K78, and 96–97 (WE). C101 and C140 are oxidised to a cystine. MRNA-binding positions include 147–152 (RRSQDK) and 191–194 (KRER).

The protein belongs to the eukaryotic initiation factor 4E family. As to quaternary structure, EIF4F is a multi-subunit complex, the composition of which varies with external and internal environmental conditions. It is composed of at least EIF4A, EIF4E and EIF4G. EIF4E is also known to interact with other partners. In higher plants two isoforms of EIF4F have been identified, named isoform EIF4F and isoform EIF(iso)4F. Isoform EIF4F has subunits p220 and p26, whereas isoform EIF(iso)4F has subunits p82 and p28. In terms of assembly, (Microbial infection) Interacts with viral genome-linked protein (VPg); this interaction is possible in susceptible hosts but impaired in resistant plants. According to the redox status, the Cys-101-Cys-140 disulfide bridge may have a role in regulating protein function by affecting its ability to bind capped mRNA.

The protein localises to the cytoplasm. The protein resides in the nucleus. Its function is as follows. Component of the protein complex eIF4F, which is involved in the recognition of the mRNA cap, ATP-dependent unwinding of 5'-terminal secondary structure and recruitment of mRNA to the ribosome. Recognizes and binds the 7-methylguanosine-containing mRNA cap during an early step in the initiation of protein synthesis and facilitates ribosome binding by inducing the unwinding of the mRNAs secondary structures. Key component of recessive resistance to potyviruses. (Microbial infection) Susceptibility host factor required for viral infection by recruiting viral RNAs to the host ribosomal complex via an interaction with viral genome-linked protein (VPg). The chain is Eukaryotic translation initiation factor isoform 4E from Capsicum annuum (Capsicum pepper).